Consider the following 194-residue polypeptide: Protein GrpE (194 aa).

The interval 1 to 40 is disordered; the sequence is MSRKHHKEQEEIQEQETISAGAAETPAEETAAIPAATEAD. A compositionally biased stretch (low complexity) spans 20–38; that stretch reads AGAAETPAEETAAIPAATE.

Belongs to the GrpE family. In terms of assembly, homodimer.

Its subcellular location is the cytoplasm. Its function is as follows. Participates actively in the response to hyperosmotic and heat shock by preventing the aggregation of stress-denatured proteins, in association with DnaK and GrpE. It is the nucleotide exchange factor for DnaK and may function as a thermosensor. Unfolded proteins bind initially to DnaJ; upon interaction with the DnaJ-bound protein, DnaK hydrolyzes its bound ATP, resulting in the formation of a stable complex. GrpE releases ADP from DnaK; ATP binding to DnaK triggers the release of the substrate protein, thus completing the reaction cycle. Several rounds of ATP-dependent interactions between DnaJ, DnaK and GrpE are required for fully efficient folding. The chain is Protein GrpE from Chlorobaculum tepidum (strain ATCC 49652 / DSM 12025 / NBRC 103806 / TLS) (Chlorobium tepidum).